The chain runs to 859 residues: Leucine--tRNA ligase (859 aa).

Residues 42–52 carry the 'HIGH' region motif; the sequence is PYPSGRLHMGH. Positions 618 to 622 match the 'KMSKS' region motif; the sequence is KMSKS. Lys-621 is an ATP binding site.

Belongs to the class-I aminoacyl-tRNA synthetase family.

The protein localises to the cytoplasm. It carries out the reaction tRNA(Leu) + L-leucine + ATP = L-leucyl-tRNA(Leu) + AMP + diphosphate. This is Leucine--tRNA ligase from Shewanella baltica (strain OS195).